A 374-amino-acid chain; its full sequence is 2-oxoglutarate-Fe(II) type oxidoreductase ppzC (374 aa).

The disordered stretch occupies residues 111–130; the sequence is KDGPFDSGYRGPGTQRVNPT. Positions 220-330 constitute a Fe2OG dioxygenase domain; it reads YPDASLEINF…RVSMPFFWGF (111 aa). Residues His254, Asp256, and His311 each coordinate Fe cation. Arg321 contributes to the 2-oxoglutarate binding site.

This sequence belongs to the iron/ascorbate-dependent oxidoreductase family. Fe(2+) serves as cofactor.

It carries out the reaction peramine + 2-oxoglutarate + O2 = 8-hydroxyperamine + succinate + CO2. It participates in secondary metabolite biosynthesis. In terms of biological role, 2-oxoglutarate-Fe(II) type oxidoreductase; part of the gene cluster that mediates the biosynthesis of pyrrolopyrazines, secondary metabolites showing insecticidal activity. Within the pathway, ppzC uses peramine as substrate for hydroxylation to yield the novel analog 8-hydroxyperamine. The single multifunctional NRPS ppzA is sufficient to produce peramine via condensation of 1-pyrroline-5-carboxylate and arginine, N-methylation of the alpha-amino group of arginine and reduction of the thioester and the cyclization to form an iminium ion resulting in release from the peptide synthetase. Deprotonation of this intermediate and oxidation of the pyrroline ring would give rise to peramine. In Epichloe species that produce only peramine, the peramine synthetase gene is not localized in a gene cluster, in contrast to Metarhizium species that contain additional pyrrolopyrazine biosynthesis genes. The 2-oxoglutarate-Fe(II) type oxidoreductase ppzC hydroxylates peramine to yield the newly identified compound 8-hydroxyperamine whereas ppzD converts L-proline into trans-4-hydroxy-L-proline, a precursor of peramine biosynthesis. The chain is 2-oxoglutarate-Fe(II) type oxidoreductase ppzC from Metarhizium rileyi (strain RCEF 4871) (Nomuraea rileyi).